The sequence spans 154 residues: 6,7-dimethyl-8-ribityllumazine synthase (154 aa).

5-amino-6-(D-ribitylamino)uracil is bound by residues Phe22, 56–58 (AFE), and 80–82 (AVI). 85 to 86 (ET) provides a ligand contact to (2S)-2-hydroxy-3-oxobutyl phosphate. His88 acts as the Proton donor in catalysis. Phe113 lines the 5-amino-6-(D-ribitylamino)uracil pocket. Residue Arg127 coordinates (2S)-2-hydroxy-3-oxobutyl phosphate.

This sequence belongs to the DMRL synthase family.

The enzyme catalyses (2S)-2-hydroxy-3-oxobutyl phosphate + 5-amino-6-(D-ribitylamino)uracil = 6,7-dimethyl-8-(1-D-ribityl)lumazine + phosphate + 2 H2O + H(+). The protein operates within cofactor biosynthesis; riboflavin biosynthesis; riboflavin from 2-hydroxy-3-oxobutyl phosphate and 5-amino-6-(D-ribitylamino)uracil: step 1/2. Functionally, catalyzes the formation of 6,7-dimethyl-8-ribityllumazine by condensation of 5-amino-6-(D-ribitylamino)uracil with 3,4-dihydroxy-2-butanone 4-phosphate. This is the penultimate step in the biosynthesis of riboflavin. This is 6,7-dimethyl-8-ribityllumazine synthase from Thermoanaerobacter sp. (strain X514).